Here is a 301-residue protein sequence, read N- to C-terminus: NADH-cytochrome b5 reductase 2 (301 aa).

A helical transmembrane segment spans residues 14-30 (FLVPFAGATALSIGLAL). The 105-residue stretch at 51-155 (NEWVDLKLSK…KGPIVKWKWE (105 aa)) folds into the FAD-binding FR-type domain. 158–193 (QFKSIALIGGGTGITPLYQLLHQITSNPKDNTKVNL) is a binding site for FAD.

The protein belongs to the flavoprotein pyridine nucleotide cytochrome reductase family. It depends on FAD as a cofactor.

The protein localises to the mitochondrion outer membrane. It carries out the reaction 2 Fe(III)-[cytochrome b5] + NADH = 2 Fe(II)-[cytochrome b5] + NAD(+) + H(+). In terms of biological role, may mediate the reduction of outer membrane cytochrome b5. This chain is NADH-cytochrome b5 reductase 2 (MCR1), found in Candida albicans (strain SC5314 / ATCC MYA-2876) (Yeast).